We begin with the raw amino-acid sequence, 490 residues long: GTPase Der (490 aa).

2 EngA-type G domains span residues 1-165 (MRIA…QIPV) and 227-400 (LKVA…TIAT). Residues 7 to 14 (GRPNVGKS), 54 to 58 (DTGGV), 117 to 120 (NKAD), 233 to 240 (GHPNVGKS), 280 to 284 (DTAGL), and 345 to 348 (NKWD) contribute to the GTP site. One can recognise a KH-like domain in the interval 401-485 (TKLSTSLVNK…PFDLEYKAKP (85 aa)).

This sequence belongs to the TRAFAC class TrmE-Era-EngA-EngB-Septin-like GTPase superfamily. EngA (Der) GTPase family. As to quaternary structure, associates with the 50S ribosomal subunit.

GTPase that plays an essential role in the late steps of ribosome biogenesis. This is GTPase Der from Chlamydia trachomatis serovar L2b (strain UCH-1/proctitis).